Reading from the N-terminus, the 427-residue chain is Trigger factor (427 aa).

In terms of domain architecture, PPIase FKBP-type spans 163–248 (GDTVVIDFVG…IHEVKAKEVP (86 aa)).

This sequence belongs to the FKBP-type PPIase family. Tig subfamily.

It localises to the cytoplasm. The catalysed reaction is [protein]-peptidylproline (omega=180) = [protein]-peptidylproline (omega=0). In terms of biological role, involved in protein export. Acts as a chaperone by maintaining the newly synthesized protein in an open conformation. Functions as a peptidyl-prolyl cis-trans isomerase. The polypeptide is Trigger factor (Streptococcus mutans serotype c (strain ATCC 700610 / UA159)).